A 163-amino-acid chain; its full sequence is Calmodulin (163 aa).

Ala-2 bears the N-acetylalanine mark. EF-hand domains are found at residues 11-46 (EQIAEFKEAFALFDKDGDGTITTKELGTVMRSLGQN), 47-82 (PTEAELQDMISEVDADGNGTIDFPEFLMLMARKMKE), 84-119 (DHEDELREAFKVFDKDGNGFISAAELRHVMTNLGEK), and 120-155 (LSEEEVDEMIREADVDGDGQVNYEEFVRMMTSGATD). Residues Asp-24, Asp-26, Asp-28, Thr-30, Glu-35, Asp-60, Asp-62, Asn-64, Thr-66, Glu-71, Asp-97, Asp-99, Asn-101, Glu-108, Asp-133, Asp-135, Asp-137, Gln-139, and Glu-144 each contribute to the Ca(2+) site.

Belongs to the calmodulin family. As to quaternary structure, associates with the spoke-associated complex containing CFAP61, CFAP91 and CFAP251; the association is calcium sensitive. Trimethylation of Lys-119 observed in other calmodulins is absent here.

It is found in the cytoplasm. The protein localises to the cytoskeleton. Its subcellular location is the flagellum axoneme. Its function is as follows. Calmodulin mediates the control of a large number of enzymes, ion channels and other proteins by Ca(2+). Among the enzymes to be stimulated by the calmodulin-Ca(2+) complex are a number of protein kinases and phosphatases. The chain is Calmodulin from Chlamydomonas reinhardtii (Chlamydomonas smithii).